A 46-amino-acid chain; its full sequence is Protein PsbN (46 aa).

The chain crosses the membrane as a helical span at residues 10–30 (IAITILIVLLGLTAFGVYTAF).

The protein belongs to the PsbN family.

It is found in the cellular thylakoid membrane. Its function is as follows. May play a role in photosystem I and II biogenesis. The protein is Protein PsbN of Prochlorococcus marinus (strain SARG / CCMP1375 / SS120).